A 206-amino-acid chain; its full sequence is Putative 3-methyladenine DNA glycosylase (206 aa).

The protein belongs to the DNA glycosylase MPG family.

In Staphylococcus carnosus (strain TM300), this protein is Putative 3-methyladenine DNA glycosylase.